Reading from the N-terminus, the 657-residue chain is UvrABC system protein B (657 aa).

The 386-residue stretch at 24–409 (AGVRNQVKSQ…SGHIVQQIIR (386 aa)) folds into the Helicase ATP-binding domain. Residue 37-44 (GTTGSGKT) participates in ATP binding. The Beta-hairpin motif lies at 90-113 (YYDYYQPEAYIARSDTYIEKSLLI). Positions 426–589 (QVDDLLEEIR…IVPKPIIKAI (164 aa)) constitute a Helicase C-terminal domain. In terms of domain architecture, UVR spans 617 to 652 (EEQIKKYEALMQRAAKEFRFNEAAKYRDAMQACKEQ).

Belongs to the UvrB family. Forms a heterotetramer with UvrA during the search for lesions. Interacts with UvrC in an incision complex.

The protein resides in the cytoplasm. Its function is as follows. The UvrABC repair system catalyzes the recognition and processing of DNA lesions. A damage recognition complex composed of 2 UvrA and 2 UvrB subunits scans DNA for abnormalities. Upon binding of the UvrA(2)B(2) complex to a putative damaged site, the DNA wraps around one UvrB monomer. DNA wrap is dependent on ATP binding by UvrB and probably causes local melting of the DNA helix, facilitating insertion of UvrB beta-hairpin between the DNA strands. Then UvrB probes one DNA strand for the presence of a lesion. If a lesion is found the UvrA subunits dissociate and the UvrB-DNA preincision complex is formed. This complex is subsequently bound by UvrC and the second UvrB is released. If no lesion is found, the DNA wraps around the other UvrB subunit that will check the other stand for damage. The chain is UvrABC system protein B from Chlamydia pneumoniae (Chlamydophila pneumoniae).